Consider the following 137-residue polypeptide: MPPKAADKKPASKAPATASKAPEKKDAGKKTAASGDKKKRTKTRKETYSSYIYKVLKQVHPDTGISNRAMSILNSFVNDIFERVATEASKLAAYNKKSTISSREIQTSVRLILPGELAKHAVSEGTKAVTKYSSSTK.

Over residues 1-10 (MPPKAADKKP) the composition is skewed to basic and acidic residues. A disordered region spans residues 1–45 (MPPKAADKKPASKAPATASKAPEKKDAGKKTAASGDKKKRTKTRK). Residues lysine 8 and lysine 9 each carry the N6-acetyllysine; alternate modification. Glycyl lysine isopeptide (Lys-Gly) (interchain with G-Cter in SUMO); alternate cross-links involve residues lysine 8 and lysine 9. The residue at position 12 (serine 12) is a Phosphoserine. Lysine 13 is subject to N6-acetyllysine. Position 24 is an N6-acetyllysine; alternate (lysine 24). Lysine 24 is covalently cross-linked (Glycyl lysine isopeptide (Lys-Gly) (interchain with G-Cter in SUMO); alternate). Lysine 25 is covalently cross-linked (Glycyl lysine isopeptide (Lys-Gly) (interchain with G-Cter in SUMO)). Residue lysine 131 forms a Glycyl lysine isopeptide (Lys-Gly) (interchain with G-Cter in ubiquitin) linkage.

It belongs to the histone H2B family. As to quaternary structure, the nucleosome is a histone octamer containing two molecules each of H2A, H2B, H3 and H4 assembled in one H3-H4 heterotetramer and two H2A-H2B heterodimers. The octamer wraps approximately 147 bp of DNA. Post-translationally, monoubiquitinated by the UBC2-BRE1 complex to form H2BK123ub1. H2BK123ub1 gives a specific tag for epigenetic transcriptional activation and is also prerequisite for H3K4me and H3K79me formation. H2BK123ub1 also modulates the formation of double-strand breaks during meiosis and is a prerequisite for DNA-damage checkpoint activation. Phosphorylated by STE20 to form H2BS10ph during progression through meiotic prophase. May be correlated with chromosome condensation. In terms of processing, acetylated by GCN5 to form H2BK11ac and H2BK16ac. H2BK16ac can also be formed by ESA1. Acetylation of N-terminal lysines and particularly formation of H2BK11acK16ac has a positive effect on transcription. Post-translationally, sumoylation to form H2BK6su or H2BK7su, and probably also H2BK16su or H2BK17su, occurs preferentially near the telomeres and represses gene transcription.

The protein resides in the nucleus. The protein localises to the chromosome. In terms of biological role, core component of nucleosome. Nucleosomes wrap and compact DNA into chromatin, limiting DNA accessibility to the cellular machineries which require DNA as a template. Histones thereby play a central role in transcription regulation, DNA repair, DNA replication and chromosomal stability. DNA accessibility is regulated via a complex set of post-translational modifications of histones, also called histone code, and nucleosome remodeling. This Pyricularia oryzae (strain Y34) (Rice blast fungus) protein is Histone H2B (HTB1).